The chain runs to 235 residues: uncharacterized protein (235 aa).

This is an uncharacterized protein from Bacillus subtilis (strain 168).